A 164-amino-acid polypeptide reads, in one-letter code: Protein-export protein SecB (164 aa).

Belongs to the SecB family. As to quaternary structure, homotetramer, a dimer of dimers. One homotetramer interacts with 1 SecA dimer.

It localises to the cytoplasm. Its function is as follows. One of the proteins required for the normal export of preproteins out of the cell cytoplasm. It is a molecular chaperone that binds to a subset of precursor proteins, maintaining them in a translocation-competent state. It also specifically binds to its receptor SecA. The sequence is that of Protein-export protein SecB from Chromohalobacter salexigens (strain ATCC BAA-138 / DSM 3043 / CIP 106854 / NCIMB 13768 / 1H11).